Here is a 192-residue protein sequence, read N- to C-terminus: Ion-translocating oxidoreductase complex subunit A (192 aa).

Helical transmembrane passes span 5 to 25 (ILLL…FLGL), 39 to 59 (IGMG…AYLV), 67 to 87 (LGIE…VVQF), 102 to 122 (LLGI…VALL), 134 to 154 (IIYG…FASM), and 171 to 191 (SIAM…TGLV).

Belongs to the NqrDE/RnfAE family. The complex is composed of six subunits: RnfA, RnfB, RnfC, RnfD, RnfE and RnfG.

Its subcellular location is the cell inner membrane. Part of a membrane-bound complex that couples electron transfer with translocation of ions across the membrane. This is Ion-translocating oxidoreductase complex subunit A from Vibrio campbellii (strain ATCC BAA-1116).